A 311-amino-acid polypeptide reads, in one-letter code: 4-diphosphocytidyl-2-C-methyl-D-erythritol kinase (311 aa).

Residue Lys-16 is part of the active site. 100-110 (PIGAGLAGGSS) serves as a coordination point for ATP. Asp-142 is an active-site residue.

It belongs to the GHMP kinase family. IspE subfamily.

The enzyme catalyses 4-CDP-2-C-methyl-D-erythritol + ATP = 4-CDP-2-C-methyl-D-erythritol 2-phosphate + ADP + H(+). The protein operates within isoprenoid biosynthesis; isopentenyl diphosphate biosynthesis via DXP pathway; isopentenyl diphosphate from 1-deoxy-D-xylulose 5-phosphate: step 3/6. Functionally, catalyzes the phosphorylation of the position 2 hydroxy group of 4-diphosphocytidyl-2C-methyl-D-erythritol. This Prochlorococcus marinus (strain MIT 9215) protein is 4-diphosphocytidyl-2-C-methyl-D-erythritol kinase.